The primary structure comprises 511 residues: 2-isopropylmalate synthase (511 aa).

The region spanning 5–267 (LIIFDTTLRD…DTDINATHIL (263 aa)) is the Pyruvate carboxyltransferase domain. Residues D14, H202, H204, and N238 each contribute to the Mn(2+) site. Residues 392 to 511 (KLVSLKVCTE…ATNKAQHPQI (120 aa)) form a regulatory domain region.

It belongs to the alpha-IPM synthase/homocitrate synthase family. LeuA type 1 subfamily. Homodimer. Mn(2+) serves as cofactor.

It localises to the cytoplasm. The catalysed reaction is 3-methyl-2-oxobutanoate + acetyl-CoA + H2O = (2S)-2-isopropylmalate + CoA + H(+). The protein operates within amino-acid biosynthesis; L-leucine biosynthesis; L-leucine from 3-methyl-2-oxobutanoate: step 1/4. In terms of biological role, catalyzes the condensation of the acetyl group of acetyl-CoA with 3-methyl-2-oxobutanoate (2-ketoisovalerate) to form 3-carboxy-3-hydroxy-4-methylpentanoate (2-isopropylmalate). The sequence is that of 2-isopropylmalate synthase from Ruthia magnifica subsp. Calyptogena magnifica.